The chain runs to 140 residues: Pre-mRNA-splicing factor NTC20 (140 aa).

A Phosphoserine modification is found at S139.

In terms of assembly, belongs to the NTC complex (or PRP19-associated complex), composed of at least CEF1, CLF1, ISY1, NTC20, SNT309, SYF1, SYF2, and PRP19. The NTC complex associates with the spliceosome after the release of the U1 and U4 snRNAs and forms the CWC spliceosome subcomplex (or CEF1-associated complex) reminiscent of a late-stage spliceosome composed also of the U2, U5 and U6 snRNAs and at least BUD13, BRR2, CDC40, CUS1, CWC2, CWC15, CWC21, CWC22, CWC23, CWC24, CWC25, CWC27, ECM2, HSH155, IST3, LEA1, MSL1, PRP8, PRP9, PRP11, PRP21, PRP22, PRP45, PRP46, SLU7, SMB1, SMD1, SMD2, SMD3, SMX2, SMX3, SNU114, SPP2, RSE1 and YJU2. Interacts with CEF1, CLF1, ISY1, PRP46, and SYF1.

It localises to the nucleus. In terms of biological role, involved in pre-mRNA splicing. As a component of the NTC complex, associates to the spliceosome to mediate conformational rearrangement or to stabilize the structure of the spliceosome after U4 snRNA dissociation, which leads to spliceosome maturation. In Saccharomyces cerevisiae (strain ATCC 204508 / S288c) (Baker's yeast), this protein is Pre-mRNA-splicing factor NTC20 (NTC20).